The primary structure comprises 388 residues: Na(+)/H(+) antiporter NhaA (388 aa).

The Cytoplasmic segment spans residues 1 to 11 (MKHLHRFFSSD). A helical membrane pass occupies residues 12–31 (ASGGIILIIAAILAMIMANS). Residues 32–58 (GATSGWYHDFLETPVQLRVGSLEINKN) are Periplasmic-facing. A helical transmembrane segment spans residues 59-80 (MLLWINDALMAVFFLLVGLEVK). The Cytoplasmic portion of the chain corresponds to 81–96 (RELMQGSLASLLQAAF). The chain crosses the membrane as a helical span at residues 97-116 (PVIAAIGGMIVPALLYLAFN). At 117–122 (YADPIT) the chain is on the periplasmic side. A helical membrane pass occupies residues 123–130 (REGWAIPA). The Cytoplasmic segment spans residues 131 to 154 (ATDIAFALGVLALLGSRVPLVLKI). Residues 155–176 (FLMALAIIDDLGAIIIIALFYT) traverse the membrane as a helical segment. Over 177 to 180 (NDLS) the chain is Periplasmic. The chain crosses the membrane as a helical span at residues 181-200 (MASLGVAAVAIAVLAVLNLC). Residues 201-204 (GVRR) are Cytoplasmic-facing. Residues 205–222 (TGVYILVGVVLWTAVLKS) form a helical membrane-spanning segment. G223 is a topological domain (periplasmic). Residues 224–236 (VHATLAGVIVGFF) form a helical membrane-spanning segment. Residues 237–253 (IPLKEKHGRSPAKRLEH) are Cytoplasmic-facing. The chain crosses the membrane as a helical span at residues 254-272 (VLHPWVAYLILPLFAFANA). At 273-286 (GVSLQGVTLDGLTS) the chain is on the periplasmic side. A helical membrane pass occupies residues 287 to 310 (ILPLGIIAGLLIGKPLGISLFCWL). Over 311–339 (ALRLKLAHLPEGTTYQQIMVVGILCGIGF) the chain is Cytoplasmic. The helical transmembrane segment at 340–350 (TMSIFIASLAF) threads the bilayer. Over 351–357 (GSVDPEL) the chain is Periplasmic. A helical transmembrane segment spans residues 358-380 (INWAKLGILVGSISSAVIGYSWL). Topologically, residues 381-388 (RVRLRPSV) are cytoplasmic.

Belongs to the NhaA Na(+)/H(+) (TC 2.A.33) antiporter family.

It is found in the cell inner membrane. The enzyme catalyses Na(+)(in) + 2 H(+)(out) = Na(+)(out) + 2 H(+)(in). Its function is as follows. Na(+)/H(+) antiporter that extrudes sodium in exchange for external protons. The polypeptide is Na(+)/H(+) antiporter NhaA (Shigella flexneri serotype 5b (strain 8401)).